A 268-amino-acid polypeptide reads, in one-letter code: Undecaprenyl-diphosphatase (268 aa).

8 consecutive transmembrane segments (helical) span residues 8–28, 41–61, 83–103, 108–128, 144–164, 184–204, 218–238, and 246–266; these read VILG…TGHL, AFWD…IVGL, FVIG…VAGK, VLFN…ILLW, FPLL…IPGV, AAEF…AYDF, IVAI…KTFL, and FVVF…ALAL.

It belongs to the UppP family.

It localises to the cell inner membrane. The catalysed reaction is di-trans,octa-cis-undecaprenyl diphosphate + H2O = di-trans,octa-cis-undecaprenyl phosphate + phosphate + H(+). Catalyzes the dephosphorylation of undecaprenyl diphosphate (UPP). Confers resistance to bacitracin. This Bradyrhizobium diazoefficiens (strain JCM 10833 / BCRC 13528 / IAM 13628 / NBRC 14792 / USDA 110) protein is Undecaprenyl-diphosphatase.